Reading from the N-terminus, the 1228-residue chain is AT-rich interactive domain-containing protein 4B (1228 aa).

Disordered stretches follow at residues 123–167 (LPLT…DDRK) and 266–307 (KTEL…PFPE). S276, S295, and S296 each carry phosphoserine. Acidic residues predominate over residues 277–305 (EAEEEEEEEDDEKEKEDNSSEEEEEIEPF). The ARID domain maps to 306-398 (PEERENFLQQ…YLYGFEEYCR (93 aa)). Residues K428 and K461 each participate in a glycyl lysine isopeptide (Lys-Gly) (interchain with G-Cter in SUMO2) cross-link. A compositionally biased stretch (basic and acidic residues) spans 437 to 464 (EVNVEDSKNMIPKEETPAEDESERKENI). Disordered regions lie at residues 437-466 (EVNV…NIKP), 479-525 (PAQS…EQAR), 539-606 (RPAD…SDTG), 620-802 (LQAS…EEKR), 825-1129 (LNNS…RLPK), and 1168-1204 (SEVA…SITA). The residue at position 482 (S482) is a Phosphoserine. Residues 483–511 (DQEKEANITKLEEKESLEDKDGATARAEE) are compositionally biased toward basic and acidic residues. Over residues 546-555 (PKIKHRKKIK) the composition is skewed to basic residues. Residues 556 to 569 (NKLDKEKDRDEKYS) show a composition bias toward basic and acidic residues. A phosphoserine mark is found at S579, S581, and S588. The segment covering 596–606 (DLADAKNSDTG) has biased composition (basic and acidic residues). S630 is modified (phosphoserine). 2 stretches are compositionally biased toward basic and acidic residues: residues 635-667 (ERCA…KEEL) and 691-700 (SPERLRKDVE). A Glycyl lysine isopeptide (Lys-Gly) (interchain with G-Cter in SUMO2) cross-link involves residue K664. A phosphoserine mark is found at S691 and S703. Residues 701–713 (AISEDTDFEEEDE) are compositionally biased toward acidic residues. Position 706 is a phosphothreonine (T706). Residues 721-730 (VKKDTTDKAL) are compositionally biased toward basic and acidic residues. The span at 744–753 (IQTNCLQSGS) shows a compositional bias: polar residues. 3 stretches are compositionally biased toward basic and acidic residues: residues 755 to 765 (GKKEDRTKSKE), 825 to 843 (LNNS…RKDV), and 911 to 926 (KPVE…RKTE). The segment covering 927–937 (FPSSGSNSVLN) has biased composition (polar residues). Phosphoserine is present on S930. Position 942 is a phosphothreonine (T942). Residues 944–965 (ESPSSVTVTETSQQQSSVTVSV) are compositionally biased toward low complexity. Position 945 is a phosphoserine (S945). A compositionally biased stretch (basic and acidic residues) spans 972–981 (EEVRSIKSET). Residues 1003–1017 (SSPAGFNASVSSSSS) are compositionally biased toward low complexity. A compositionally biased stretch (basic residues) spans 1046–1064 (KKQKRSHKATVVNNKKKGK). Residue T1066 is modified to Phosphothreonine. A phosphoserine mark is found at S1068, S1069, S1071, and S1075. Basic and acidic residues predominate over residues 1112-1124 (KNGDKDPDLKEPS). The stretch at 1141–1186 (ENMTSAERISILQEKLQEIRKHYLSLKSEVASIDRRRKRLKKKERE) forms a coiled coil. Positions 1188–1204 (AATSSSSSSPSSSSITA) are enriched in low complexity.

Component of a Sin3A corepressor complex consisting of SIN3A, SAP130, SUDS3/SAP45, SAP180, HDAC1 and HDAC2. Interacts with ARID4A. Interacts with AR.

It localises to the nucleus. In terms of biological role, acts as a transcriptional repressor. May function in the assembly and/or enzymatic activity of the Sin3A corepressor complex or in mediating interactions between the complex and other regulatory complexes. Plays a role in the regulation of epigenetic modifications at the PWS/AS imprinting center near the SNRPN promoter, where it might function as part of a complex with RB1 and ARID4A. Involved in spermatogenesis, together with ARID4A, where it functions as a transcriptional coactivator for AR (androgen receptor) and enhances expression of genes required for sperm maturation. Regulates expression of the tight junction protein CLDN3 in the testis, which is important for integrity of the blood-testis barrier. Plays a role in myeloid homeostasis where it regulates the histone methylation state of bone marrow cells and expression of various genes involved in hematopoiesis. May function as a leukemia suppressor. This Rattus norvegicus (Rat) protein is AT-rich interactive domain-containing protein 4B (Arid4b).